The chain runs to 251 residues: Putative imidazole glycerol phosphate synthase subunit hisF2 (251 aa).

The active site involves D130.

Belongs to the HisA/HisF family. Heterodimer of HisH and HisF.

The protein resides in the cytoplasm. It catalyses the reaction 5-[(5-phospho-1-deoxy-D-ribulos-1-ylimino)methylamino]-1-(5-phospho-beta-D-ribosyl)imidazole-4-carboxamide + L-glutamine = D-erythro-1-(imidazol-4-yl)glycerol 3-phosphate + 5-amino-1-(5-phospho-beta-D-ribosyl)imidazole-4-carboxamide + L-glutamate + H(+). Its pathway is amino-acid biosynthesis; L-histidine biosynthesis; L-histidine from 5-phospho-alpha-D-ribose 1-diphosphate: step 5/9. Functionally, IGPS catalyzes the conversion of PRFAR and glutamine to IGP, AICAR and glutamate. The HisF subunit catalyzes the cyclization activity that produces IGP and AICAR from PRFAR using the ammonia provided by the HisH subunit. The chain is Putative imidazole glycerol phosphate synthase subunit hisF2 (hisF2) from Pseudomonas aeruginosa (strain ATCC 15692 / DSM 22644 / CIP 104116 / JCM 14847 / LMG 12228 / 1C / PRS 101 / PAO1).